Here is a 354-residue protein sequence, read N- to C-terminus: Ubiquinol oxidase 1a, mitochondrial (354 aa).

The N-terminal 62 residues, 1–62 (MMITRGGAKA…RAPTIGGMRF (62 aa)), are a transit peptide targeting the mitochondrion. The segment at 68 to 99 (LGEKTPMKEEDANQKKTENESTGGDAAGGNNK) is disordered. Residues 72–86 (TPMKEEDANQKKTEN) are compositionally biased toward basic and acidic residues. Residues 179–199 (AMMLETVAAVPGMVGGMLLHC) form a helical membrane-spanning segment. Glutamate 183, glutamate 222, and histidine 225 together coordinate Fe cation. Residues 241–261 (ALVITVQGVFFNAYFLGYLIS) traverse the membrane as a helical segment. Residues glutamate 273, glutamate 324, and histidine 327 each coordinate Fe cation.

This sequence belongs to the alternative oxidase family. As to quaternary structure, homodimer; disulfide-linked. The cofactor is Fe cation. As to expression, expressed in roots, stems, cotyledons, leaves and flowers. High expression in sepals.

The protein localises to the mitochondrion inner membrane. The enzyme catalyses 2 a ubiquinol + O2 = 2 a ubiquinone + 2 H2O. With respect to regulation, when the two monomeric subunits are covalently linked by a S-S bond, the enzyme is essentially inactive. When the disulfide bond is reduced, its component sulfhydryls can associate with K-keto acids through formation of a thiohemiacetal, resulting in enzyme activation. Activated by glyoxylate, irrespective to the substitution found at Cys-127. That suggests the presence of a second activation site, possibly Cys-177. In terms of biological role, catalyzes the cyanide-resistant oxidation of ubiquinol and the reduction of molecular oxygen to water, but does not translocate protons and consequently is not linked to oxidative phosphorylation. Increases respiration when the cytochrome respiratory pathway is restricted, or in response to low temperatures. This Arabidopsis thaliana (Mouse-ear cress) protein is Ubiquinol oxidase 1a, mitochondrial (AOX1A).